Consider the following 545-residue polypeptide: Chaperonin GroEL 4 (545 aa).

ATP contacts are provided by residues 30-33, K51, 87-91, G415, and D495; these read TLGP and DGTTT.

It belongs to the chaperonin (HSP60) family. Forms a cylinder of 14 subunits composed of two heptameric rings stacked back-to-back. Interacts with the co-chaperonin GroES.

Its subcellular location is the cytoplasm. It catalyses the reaction ATP + H2O + a folded polypeptide = ADP + phosphate + an unfolded polypeptide.. In terms of biological role, together with its co-chaperonin GroES, plays an essential role in assisting protein folding. The GroEL-GroES system forms a nano-cage that allows encapsulation of the non-native substrate proteins and provides a physical environment optimized to promote and accelerate protein folding. The sequence is that of Chaperonin GroEL 4 from Rhizobium meliloti (strain 1021) (Ensifer meliloti).